The sequence spans 368 residues: Chaperone protein DnaJ (368 aa).

The J domain occupies 5–65; sequence DYYEVLGLTK…QKKARYDQFG (61 aa). The CR-type zinc-finger motif lies at 125–207; the sequence is GKETEIEIPK…CRGEGKVQKR (83 aa). Zn(2+) is bound by residues Cys138, Cys141, Cys155, Cys158, Cys181, Cys184, Cys195, and Cys198. CXXCXGXG motif repeat units follow at residues 138–145, 155–162, 181–188, and 195–202; these read CETCHGSG, CSTCNGAG, CTTCHGTG, and CSTCRGEG.

The protein belongs to the DnaJ family. As to quaternary structure, homodimer. It depends on Zn(2+) as a cofactor.

It localises to the cytoplasm. In terms of biological role, participates actively in the response to hyperosmotic and heat shock by preventing the aggregation of stress-denatured proteins and by disaggregating proteins, also in an autonomous, DnaK-independent fashion. Unfolded proteins bind initially to DnaJ; upon interaction with the DnaJ-bound protein, DnaK hydrolyzes its bound ATP, resulting in the formation of a stable complex. GrpE releases ADP from DnaK; ATP binding to DnaK triggers the release of the substrate protein, thus completing the reaction cycle. Several rounds of ATP-dependent interactions between DnaJ, DnaK and GrpE are required for fully efficient folding. Also involved, together with DnaK and GrpE, in the DNA replication of plasmids through activation of initiation proteins. This chain is Chaperone protein DnaJ, found in Lysinibacillus sphaericus (Bacillus sphaericus).